Consider the following 300-residue polypeptide: MNVLSLGSSSGVVWGRVPITAPAGAATGVTSRADAHSQMRRYAQTGPTAKLSSAPMTTMWGAPLHRRWRGSRLRDPRQAKFLTLASLKWVLANRAYTPWYLVRYWRLLRFKLANPHIITRGMVFLGKGVEIHATPELAQLEIGRWVHIGDKNTIRAHEGSLRFGDKVVLGRDNVINTYLDIEIGDSVLMADWCYICDFDHRMDDITLPIKDQGIIKSPVRIGPDTWIGVKVSVLRGTTIGRGCVLGSHAVVRGAIPDYSIAVGAPAKVVKNRQLSWEASAAQRAELAAALADIERKKAAR.

The first 25 residues, 1 to 25, serve as a signal peptide directing secretion; the sequence is MNVLSLGSSSGVVWGRVPITAPAGA.

This sequence belongs to the transferase hexapeptide repeat family.

In terms of biological role, may be involved in the biosynthesis of 6-O-methylglucosyl-containing lipopolysaccharides (MGLP). Functionally, regulates host peroxisome homeostasis in response to intracellular redox levels to favor mycobacterial infection in macrophage. Induces the expression of host peroxisome biogenesis and proliferation factors as well as peroxisome associated enzymes. Inhibits the induction of host pexophagy mechanism by down-regulating the expression of pexophagy associated proteins and adapter molecules in infected macrophages. However, during increased oxidative stress conditions, it induces degradation of dysfunctional and damaged peroxisomes. Regulation of peroxisome biogenesis and degradation is dependent upon host p-mTORC1 mediated signaling pathway. The sequence is that of Probable acetyltransferase Rv3034c from Mycobacterium tuberculosis (strain ATCC 25618 / H37Rv).